Consider the following 500-residue polypeptide: MGLLTGDALFSVAVAVAIFLLLVDLMHRRQRWAARYPPGPVPVPGLGNLLQVDFENMAYSCDKLRHQFGDVFSLQFVWTPVVVVNGLLAVREALVNNSTDTSDRPTLPTNALLGFGPKAQGVIGAYYGPAWREQRRFSVSSLRNFGLGKKSLEQWVTEEAACLCAAFTNHAGQPFCPKALLNKAVCNVISSLIYARRFDYDDPMVLRLLEFLEETLRENSSLKIQVLNSIPLLLRIPCVAAKVLSAQRSFIALNDKLLAEHNTGWAPDQPPRDLTDAFLTEMHKAQGNSESSFNDENLRLLVSDLFGAGMVTTSVTLSWALLLMILHPDVQRHVQEEIDEVIGQVRCPEMADQAHMPFTNAVIHEVQRFADIVPMGVPHMTSRDTEVQGFLIPKGTMLFTNLSSVLKDETVWEKPLHFHPGHFLDAEGRFVKREAFMPFSAGPRICLGEPLARMELFLFFTSLLQRFSFSVPEGQPRPSDRGAPYLVVLPSPYQLCAVLR.

Serine 249 is modified (phosphoserine). Heme is bound at residue cysteine 446.

It belongs to the cytochrome P450 family. Requires heme as cofactor. In terms of tissue distribution, expressed at high levels in the inner zone of the adrenal cortex.

The protein resides in the endoplasmic reticulum membrane. The protein localises to the microsome membrane. The catalysed reaction is an organic molecule + reduced [NADPH--hemoprotein reductase] + O2 = an alcohol + oxidized [NADPH--hemoprotein reductase] + H2O + H(+). Its function is as follows. Cytochromes P450 are a group of heme-thiolate monooxygenases. In liver microsomes, this enzyme is involved in an NADPH-dependent electron transport pathway. It oxidizes a variety of structurally unrelated compounds, including steroids, fatty acids, and xenobiotics. The protein is Cytochrome P450 2D16 (CYP2D16) of Cavia porcellus (Guinea pig).